The following is a 159-amino-acid chain: 2-C-methyl-D-erythritol 2,4-cyclodiphosphate synthase (159 aa).

2 residues coordinate a divalent metal cation: Asp-8 and His-10. 4-CDP-2-C-methyl-D-erythritol 2-phosphate-binding positions include 8–10 (DVH) and 34–35 (HS). An a divalent metal cation-binding site is contributed by His-42. 4-CDP-2-C-methyl-D-erythritol 2-phosphate-binding positions include 56 to 58 (DIG), 61 to 65 (FPDTD), 100 to 106 (AQAPKML), 132 to 135 (TTTE), Phe-139, and Arg-142.

This sequence belongs to the IspF family. As to quaternary structure, homotrimer. The cofactor is a divalent metal cation.

The catalysed reaction is 4-CDP-2-C-methyl-D-erythritol 2-phosphate = 2-C-methyl-D-erythritol 2,4-cyclic diphosphate + CMP. It functions in the pathway isoprenoid biosynthesis; isopentenyl diphosphate biosynthesis via DXP pathway; isopentenyl diphosphate from 1-deoxy-D-xylulose 5-phosphate: step 4/6. Involved in the biosynthesis of isopentenyl diphosphate (IPP) and dimethylallyl diphosphate (DMAPP), two major building blocks of isoprenoid compounds. Catalyzes the conversion of 4-diphosphocytidyl-2-C-methyl-D-erythritol 2-phosphate (CDP-ME2P) to 2-C-methyl-D-erythritol 2,4-cyclodiphosphate (ME-CPP) with a corresponding release of cytidine 5-monophosphate (CMP). The sequence is that of 2-C-methyl-D-erythritol 2,4-cyclodiphosphate synthase from Salmonella typhi.